Here is a 527-residue protein sequence, read N- to C-terminus: DUF21 domain-containing protein At1g47330 (527 aa).

Residues M1–Y15 lie on the Extracellular side of the membrane. Residues C8–E191 enclose the CNNM transmembrane domain. The chain crosses the membrane as a helical span at residues V16–L36. Residues M37–H70 lie on the Cytoplasmic side of the membrane. Residues L71–L91 form a helical membrane-spanning segment. The Extracellular portion of the chain corresponds to D92–K93. Residues I94–I114 form a helical membrane-spanning segment. At M115–K126 the chain is on the cytoplasmic side. The helical transmembrane segment at V127 to Y147 threads the bilayer. The Extracellular segment spans residues P148–L527. 3 CBS domains span residues M210 to L271, M274 to E334, and K366 to E435. 3 disordered regions span residues K307 to L335, E358 to A384, and I464 to L527. Residue S315 is modified to Phosphoserine. A compositionally biased stretch (basic and acidic residues) spans E358–N369. Residues I464–S501 are compositionally biased toward low complexity. Residue N475 is glycosylated (N-linked (GlcNAc...) asparagine). The span at V502–S515 shows a compositional bias: polar residues. The segment covering P518–L527 has biased composition (basic and acidic residues).

The protein resides in the membrane. This chain is DUF21 domain-containing protein At1g47330 (CBSDUF7), found in Arabidopsis thaliana (Mouse-ear cress).